The following is a 278-amino-acid chain: MAATGEALTPQGYIQHHLTNLQVCATDNGLAVNHACEKAGFWTWHIDSLFFSVGLGVLFLWIFRSVGKKATSGVPGKLQCFVEMIVEFVNNSVKESFHGRNALIAPLALTIFVWVFMMNFMDMIPVDWLPHAASLMGIPYLKAVPTTDVNITFSLAIGVFLLIIFYSIKVKGVSGFVKELTLQPFNHKAMIPVNLLLETVTLIAKPISLALRLFGNLYAGELIFILIALMYGTNLLLSTLGVTLQLGWLIFHILVITLQAFIFMMLTIVYLSMAHEDH.

A run of 6 helical transmembrane segments spans residues 43–63, 104–124, 148–168, 191–211, 222–242, and 249–269; these read TWHI…LWIF, IAPL…MDMI, DVNI…FYSI, IPVN…SLAL, LIFI…TLGV, and LIFH…LTIV.

This sequence belongs to the ATPase A chain family. In terms of assembly, F-type ATPases have 2 components, CF(1) - the catalytic core - and CF(0) - the membrane proton channel. CF(1) has five subunits: alpha(3), beta(3), gamma(1), delta(1), epsilon(1). CF(0) has three main subunits: a(1), b(2) and c(9-12). The alpha and beta chains form an alternating ring which encloses part of the gamma chain. CF(1) is attached to CF(0) by a central stalk formed by the gamma and epsilon chains, while a peripheral stalk is formed by the delta and b chains.

It is found in the cell inner membrane. Functionally, key component of the proton channel; it plays a direct role in the translocation of protons across the membrane. This is ATP synthase subunit a from Shewanella baltica (strain OS185).